The following is a 229-amino-acid chain: MAGHDSGNAKRGRSPSFGVFVRKPVERASAKGTSDGAVDSQAIRIDAAQSWPDDAVEVGAVVDAYGLKGWVKLAAHAGAGRGGDALLKARDWWLQKGAERKFARVTQAKLHGDTVVAHPDGSVDRDTALALRGARVFVRRGDFPALAADEFYWVDLIGLDVVNEAGVALGKIADMIDNGVHSIMRVEYPATGKDGRPKTGERLIPFVGVYVKAVEQAAGRVVVDWEADY.

In terms of domain architecture, PRC barrel spans 148-229 (ADEFYWVDLI…RVVVDWEADY (82 aa)).

It belongs to the RimM family. In terms of assembly, binds ribosomal protein uS19.

The protein resides in the cytoplasm. Its function is as follows. An accessory protein needed during the final step in the assembly of 30S ribosomal subunit, possibly for assembly of the head region. Essential for efficient processing of 16S rRNA. May be needed both before and after RbfA during the maturation of 16S rRNA. It has affinity for free ribosomal 30S subunits but not for 70S ribosomes. This chain is Ribosome maturation factor RimM, found in Burkholderia pseudomallei (strain 1710b).